A 217-amino-acid chain; its full sequence is Ribonuclease HII 2 (217 aa).

One can recognise an RNase H type-2 domain in the interval 28–217; the sequence is GLLAGVDEAG…VREVLLERRP (190 aa). A divalent metal cation is bound by residues Asp34, Glu35, and Asp126.

This sequence belongs to the RNase HII family. Mn(2+) is required as a cofactor. Requires Mg(2+) as cofactor.

It localises to the cytoplasm. It catalyses the reaction Endonucleolytic cleavage to 5'-phosphomonoester.. Functionally, endonuclease that specifically degrades the RNA of RNA-DNA hybrids. This chain is Ribonuclease HII 2, found in Methylibium petroleiphilum (strain ATCC BAA-1232 / LMG 22953 / PM1).